Here is a 311-residue protein sequence, read N- to C-terminus: MDLKLKDCEFWYSLHGQVPGLLDWDMRNELFLPCTTDQCSLAEQILAKYRVGVMKPPEMPQKRRPSPDGDGPPCEPNLWMWVDPNILCPLGSQEAPKPSGKEDLTNISPFPQPPQKDEGSNCSEDKVVESLPSSSSEQSPLQKQGIHSPSDFELTEEEAEEPDDNSLQSPEMKCYQSQKLWQINNQEKSWQRPPLNCSHLIALALRNNPHCGLSVQEIYNFTRQHFPFFWTAPDGWKSTIHYNLCFLDSFEKVPDSLKDEDNARPRSCLWKLTKEGHRRFWEETRVLAFAQRERIQECMSQPELLTSLFDL.

Disordered regions lie at residues 56 to 76 and 90 to 171; these read PPEM…PCEP and LGSQ…QSPE. The span at 115 to 128 shows a compositional bias: basic and acidic residues; sequence QKDEGSNCSEDKVV. Low complexity predominate over residues 129–143; sequence ESLPSSSSEQSPLQK. Residues 153–164 show a composition bias toward acidic residues; that stretch reads ELTEEEAEEPDD. The fork-head DNA-binding region spans 192 to 294; the sequence is RPPLNCSHLI…RVLAFAQRER (103 aa).

Expressed in breast cancer cell lines and primary cancer.

The protein resides in the nucleus. This chain is Forkhead box protein R2 (FOXR2), found in Homo sapiens (Human).